Reading from the N-terminus, the 406-residue chain is Acetylornithine/succinyldiaminopimelate aminotransferase (406 aa).

Pyridoxal 5'-phosphate is bound by residues 108-109 and Phe141; that span reads GT. Arg144 provides a ligand contact to N(2)-acetyl-L-ornithine. 226-229 lines the pyridoxal 5'-phosphate pocket; sequence DEVQ. Residue Lys255 is modified to N6-(pyridoxal phosphate)lysine. Residue Ser283 coordinates N(2)-acetyl-L-ornithine. Pyridoxal 5'-phosphate is bound at residue Thr284.

It belongs to the class-III pyridoxal-phosphate-dependent aminotransferase family. ArgD subfamily. As to quaternary structure, homodimer. The cofactor is pyridoxal 5'-phosphate.

The protein localises to the cytoplasm. It catalyses the reaction N(2)-acetyl-L-ornithine + 2-oxoglutarate = N-acetyl-L-glutamate 5-semialdehyde + L-glutamate. The catalysed reaction is N-succinyl-(2S,6S)-2,6-diaminopimelate + 2-oxoglutarate = (S)-2-succinylamino-6-oxoheptanedioate + L-glutamate. Its pathway is amino-acid biosynthesis; L-arginine biosynthesis; N(2)-acetyl-L-ornithine from L-glutamate: step 4/4. The protein operates within amino-acid biosynthesis; L-lysine biosynthesis via DAP pathway; LL-2,6-diaminopimelate from (S)-tetrahydrodipicolinate (succinylase route): step 2/3. Functionally, involved in both the arginine and lysine biosynthetic pathways. This chain is Acetylornithine/succinyldiaminopimelate aminotransferase, found in Escherichia coli (strain K12).